The following is a 296-amino-acid chain: Phosphatidylglycerol--prolipoprotein diacylglyceryl transferase (296 aa).

7 helical membrane-spanning segments follow: residues 17–37 (LAVRWYGLMYLVGFIAAIVVG), 59–79 (MMFYGVLGTVLGGRLGYVLFY), 97–117 (GGMSFHGGFLGVTLAMVLFAW), 129–149 (FVAPMVPAGLAAGRLGNFING), 203–223 (PSQLYEIALEGIALFFVLFFF), 230–250 (LGAVSALFLIGYGLARFTVEF), and 265–285 (LSMGQWLSLPMILAGIALLVW). A 1,2-diacyl-sn-glycero-3-phospho-(1'-sn-glycerol) is bound at residue arginine 142.

The protein belongs to the Lgt family.

Its subcellular location is the cell inner membrane. It carries out the reaction L-cysteinyl-[prolipoprotein] + a 1,2-diacyl-sn-glycero-3-phospho-(1'-sn-glycerol) = an S-1,2-diacyl-sn-glyceryl-L-cysteinyl-[prolipoprotein] + sn-glycerol 1-phosphate + H(+). The protein operates within protein modification; lipoprotein biosynthesis (diacylglyceryl transfer). In terms of biological role, catalyzes the transfer of the diacylglyceryl group from phosphatidylglycerol to the sulfhydryl group of the N-terminal cysteine of a prolipoprotein, the first step in the formation of mature lipoproteins. In Burkholderia ambifaria (strain MC40-6), this protein is Phosphatidylglycerol--prolipoprotein diacylglyceryl transferase.